A 245-amino-acid chain; its full sequence is Polyhedrin (245 aa).

The protein belongs to the polyhedrin family.

Functionally, major component of the virus occlusion bodies, which are large proteinaceous structures (polyhedra), that protect the virus from the outside environment for extended periods until they are ingested by insect larvae. This is Polyhedrin (PH) from Orgyia pseudotsugata multicapsid polyhedrosis virus (OpMNPV).